A 105-amino-acid polypeptide reads, in one-letter code: 5,5'-dehydrodivanillate O-demethylase ferredoxin subunit (105 aa).

The 2Fe-2S ferredoxin-type domain maps to alanine 2–aspartate 105. [2Fe-2S] cluster-binding residues include cysteine 40, cysteine 46, cysteine 49, and cysteine 86.

The protein belongs to the adrenodoxin/putidaredoxin family. Monomer. The three-component monooxygenase is composed of an oxygenase (LigXa), a ferredoxin (LigXc) and a ferredoxin reductase (LigXd). [2Fe-2S] cluster is required as a cofactor.

It carries out the reaction 5,5'-dehydrodivanillate + NADH + O2 + H(+) = 2,2',3-trihydroxy-3'-methoxy-5,5'-dicarboxybiphenyl + formaldehyde + NAD(+) + H2O. Involved in the catabolism of 5,5'-dehydrodivanillate (DDVA), an intermediate in the biodegradation of lignin. Part of a three-component monooxygenase that catalyzes the O-demethylation of DDVA, leading to the formation of 2,2',3-trihydroxy-3'-methoxy-5,5'-dicarboxybiphenyl (OH-DDVA). LigXc probably functions as an intermediate electron transfer protein between LigXd and LigXa. The protein is 5,5'-dehydrodivanillate O-demethylase ferredoxin subunit of Sphingobium sp. (strain NBRC 103272 / SYK-6).